The sequence spans 335 residues: GTPase Obg (335 aa).

Positions 1–158 (MFVDQITLEL…RQVELELKLI (158 aa)) constitute an Obg domain. The tract at residues 126–145 (NTFFKTSVNRAPTKATPGKP) is disordered. Residues 159–334 (ADIGLVGFPN…LYRFFTQRLA (176 aa)) form the OBG-type G domain. Residues 165–172 (GFPNAGKS), 190–194 (FTTLA), 215–218 (DIPG), 285–288 (NKID), and 315–317 (SGL) each bind GTP. The Mg(2+) site is built by Ser172 and Thr192.

This sequence belongs to the TRAFAC class OBG-HflX-like GTPase superfamily. OBG GTPase family. As to quaternary structure, monomer. Requires Mg(2+) as cofactor.

The protein resides in the cytoplasm. An essential GTPase which binds GTP, GDP and possibly (p)ppGpp with moderate affinity, with high nucleotide exchange rates and a fairly low GTP hydrolysis rate. Plays a role in control of the cell cycle, stress response, ribosome biogenesis and in those bacteria that undergo differentiation, in morphogenesis control. The sequence is that of GTPase Obg from Chlamydia pneumoniae (Chlamydophila pneumoniae).